Here is a 302-residue protein sequence, read N- to C-terminus: Putative F-box protein At1g32420 (302 aa).

Basic and acidic residues predominate over residues 1-10 (MKRGNEENNH). The interval 1–27 (MKRGNEENNHKTSSSSSTQRLSRRKIS) is disordered. In terms of domain architecture, F-box spans 31–78 (KSGNVNIPLDLTVEILKKLPAKSLLRFQCVSKQWLSIISSRRDFIDSI).

The polypeptide is Putative F-box protein At1g32420 (Arabidopsis thaliana (Mouse-ear cress)).